A 469-amino-acid chain; its full sequence is MSLDIKKPNITKTKKKKTGFVVKMQLNNNRGGNKRNIFIFFFFRNYYTWILWFCLSLYFFTSYFSVEDQSSPSSIRLLSNHKTSSSLPSRALIESSAIKTTSIGLFTGMKIYVYDLPASYNDDWVTASDRCASHLFAAEVAIHRALLSSDVRTLDPDEADYFFVPVYVSCNFSTSNGFPSLSHARSLLSSAVDFLSDHYPFWNRSQGSDHVFVASHDFGACFHAMEDMAIEEGIPKFMKRSIILQTFGVKYKHPCQEVEHVVIPPYIPPESVQKAIEKAPVNGRRDIWAFFRGKMEVNPKNISGRFYSKGVRTAILKKFGGRRRFYLNRHRFAGYRSEIVRSVFCLCPLGWAPWSPRLVESAVLGCVPVVIADGIQLPFSETVQWPEISLTVAEKDVRNLRKVLEHVAATNLSAIQRNLHEPVFKRALLYNVPMKEGDATWHILESLWRKLDDRSYRRSRVLSQREVDM.

Topologically, residues 1-36 (MSLDIKKPNITKTKKKKTGFVVKMQLNNNRGGNKRN) are cytoplasmic. A helical; Signal-anchor for type II membrane protein membrane pass occupies residues 37-57 (IFIFFFFRNYYTWILWFCLSL). The Lumenal portion of the chain corresponds to 58 to 469 (YFFTSYFSVE…RVLSQREVDM (412 aa)). 4 N-linked (GlcNAc...) asparagine glycosylation sites follow: Asn171, Asn203, Asn301, and Asn411.

It belongs to the glycosyltransferase 47 family. As to expression, expressed in xylem cells in stems and in roots.

Its subcellular location is the golgi apparatus membrane. Its function is as follows. Involved in the synthesis of the hemicellulose glucuronoxylan, a major component of secondary cell walls. Probably involved in the synthesis of the glycosyl sequence at the glucuronoxylan reducing end. The chain is Probable glucuronoxylan glucuronosyltransferase F8H (F8H) from Arabidopsis thaliana (Mouse-ear cress).